Reading from the N-terminus, the 886-residue chain is Protein suppressor of hairy wing (886 aa).

2 disordered regions span residues 24–62 (SVSP…GIKG) and 167–211 (DEVV…KNSG). Over residues 184 to 201 (VTEEEEEEEEDDLDEEGD) the composition is skewed to acidic residues. The C2H2-type 1; atypical zinc-finger motif lies at 221–243 (HVCGKCYKTFRRLMSLKKHLEFC). Residues 291 to 314 (INCPDCPKSFKTQTSYERHIFITH) form a C2H2-type 2 zinc finger. The segment at 320 to 342 (YPCSICNANLRSEALLKLHEEQH) adopts a C2H2-type 3; atypical zinc-finger fold. 9 C2H2-type zinc fingers span residues 349 to 367 (YACK…LKRH), 381 to 403 (MSCK…LKHH), 414 to 436 (YMCH…IRTH), 442 to 464 (FDCD…RRYH), 470 to 492 (YSCT…MKRH), 498 to 520 (HKCE…SKTH), 524 to 546 (FACD…VKEH), 554 to 578 (FSCT…AGDH), and 600 to 623 (TDCA…RSVH). Residues 571–587 (QHMDAGDHSEKSGEKPQ) show a composition bias toward basic and acidic residues. The tract at residues 571–594 (QHMDAGDHSEKSGEKPQRAKRSST) is disordered.

It is found in the nucleus. Component of the gypsy chromatin insulator complex which is required for the function of the gypsy chromatin insulator and other endogenous chromatin insulators. Chromatin insulators are regulatory elements which establish independent domains of transcriptional activity within eukaryotic genomes. Insulators have two defining properties; they can block the communication between an enhancer and a promoter when placed between them and can also buffer transgenes from position effect variegation (PEV). Insulators are proposed to structure the chromatin fiber into independent domains of differing transcriptional potential by promoting the formation of distinct chromatin loops. This chromatin looping may involve the formation of insulator bodies, where homotypic interactions between individual subunits of the insulator complex could promote the clustering of widely spaced insulators at the nuclear periphery. Within the gypsy insulator complex, this protein binds specifically to a region of the gypsy element located 3' of the 5' long terminal repeat (LTR), and may also mediate interaction with other endogenous insulators at sites distinct from those recognized by Cp190. Cooperates with pita and cliff to recruit Cp190 and regulate insulator function at the front-ultraabdominal (Fub) boundary. The protein is Protein suppressor of hairy wing (su(Hw)) of Drosophila ananassae (Fruit fly).